The chain runs to 307 residues: Acyl transferase (307 aa).

Catalysis depends on charge relay system residues S116, D213, and H243.

The protein belongs to the LuxD family.

It functions in the pathway lipid metabolism; fatty acid reduction for biolumincescence. Its function is as follows. Acyl transferase is part of the fatty acid reductase system required for aldehyde biosynthesis; it produces fatty acids for the luminescent reaction. The sequence is that of Acyl transferase from Aliivibrio fischeri (strain MJ11) (Vibrio fischeri).